We begin with the raw amino-acid sequence, 116 residues long: Large ribosomal subunit protein uL18 (116 aa).

The protein belongs to the universal ribosomal protein uL18 family. As to quaternary structure, part of the 50S ribosomal subunit; part of the 5S rRNA/L5/L18/L25 subcomplex. Contacts the 5S and 23S rRNAs.

This is one of the proteins that bind and probably mediate the attachment of the 5S RNA into the large ribosomal subunit, where it forms part of the central protuberance. This is Large ribosomal subunit protein uL18 from Ectopseudomonas mendocina (strain ymp) (Pseudomonas mendocina).